The sequence spans 348 residues: Serpentine receptor class alpha-29 (348 aa).

6 consecutive transmembrane segments (helical) span residues 28–48 (FILM…QTLW), 108–130 (FLYY…DRLF), 145–165 (GFIV…FWTF), 193–213 (INDS…FLYI), 246–266 (CIII…PSIF), and 280–300 (LILA…LIVI).

It belongs to the nematode receptor-like protein sra family.

It localises to the membrane. The sequence is that of Serpentine receptor class alpha-29 (sra-29) from Caenorhabditis elegans.